The sequence spans 443 residues: ATP-dependent protease ATPase subunit HslU (443 aa).

Residues isoleucine 18, 60–65, aspartate 256, glutamate 321, and arginine 393 each bind ATP; that span reads GVGKTE.

Belongs to the ClpX chaperone family. HslU subfamily. As to quaternary structure, a double ring-shaped homohexamer of HslV is capped on each side by a ring-shaped HslU homohexamer. The assembly of the HslU/HslV complex is dependent on binding of ATP.

It localises to the cytoplasm. ATPase subunit of a proteasome-like degradation complex; this subunit has chaperone activity. The binding of ATP and its subsequent hydrolysis by HslU are essential for unfolding of protein substrates subsequently hydrolyzed by HslV. HslU recognizes the N-terminal part of its protein substrates and unfolds these before they are guided to HslV for hydrolysis. This chain is ATP-dependent protease ATPase subunit HslU, found in Photorhabdus laumondii subsp. laumondii (strain DSM 15139 / CIP 105565 / TT01) (Photorhabdus luminescens subsp. laumondii).